The following is a 399-amino-acid chain: Glutamine synthetase 1, mitochondrial (399 aa).

The transit peptide at 1 to 27 (MALRVAGLFLKKELVAPATQQLRLLRT) directs the protein to the mitochondrion. The region spanning 62-143 (VQATYLWIDG…VLCDTYSADG (82 aa)) is the GS beta-grasp domain. Positions 150-399 (KRAAFQAAID…AIVRTCLLNE (250 aa)) constitute a GS catalytic domain.

It belongs to the glutamine synthetase family. In terms of assembly, homooctamer.

It is found in the mitochondrion. The enzyme catalyses L-glutamate + NH4(+) + ATP = L-glutamine + ADP + phosphate + H(+). The protein is Glutamine synthetase 1, mitochondrial (Gs1) of Drosophila melanogaster (Fruit fly).